The chain runs to 298 residues: Protoheme IX farnesyltransferase 1 (298 aa).

9 helical membrane passes run 21–41, 43–63, 94–114, 118–138, 144–164, 168–188, 215–235, 236–256, and 274–294; these read QVWW…INSF, SYLI…SMGA, KGAF…LLIF, LAAL…SYLL, YSII…WYTV, FSWI…VHVW, TAVS…IPYF, LGFF…PIVI, and FIYT…IHII.

Belongs to the UbiA prenyltransferase family. Protoheme IX farnesyltransferase subfamily.

The protein resides in the cell membrane. The catalysed reaction is heme b + (2E,6E)-farnesyl diphosphate + H2O = Fe(II)-heme o + diphosphate. It participates in porphyrin-containing compound metabolism; heme O biosynthesis; heme O from protoheme: step 1/1. Converts heme B (protoheme IX) to heme O by substitution of the vinyl group on carbon 2 of heme B porphyrin ring with a hydroxyethyl farnesyl side group. The protein is Protoheme IX farnesyltransferase 1 of Picrophilus torridus (strain ATCC 700027 / DSM 9790 / JCM 10055 / NBRC 100828 / KAW 2/3).